Reading from the N-terminus, the 695-residue chain is MNLRSVFTVEQQRILQRYYENGMTNQSKNCFQLILQCAQETKLDFSVVRTWVGNKRRKMSSKSALESGGAPPGTAHTAPSVPPEAMVRNVVNIARSQSQQSSWTSSNNDVIVTGIYSPASSSNRQGSTKQTNASMAEIHKTSIPRLPGKSDADFQQQHIPIGRQIPHCKNASLLVGEKTIILSRQTSVLNSANSIYSHTKKSYGGSSVQTAELVLPQKPMICHRPCKAELMGCQRLQKPEHAALASHGPPGQRANARDPCSTQNLEIREVFSLAVTDQPQRIVGGSTAQKHCSVEGSSLSIAMETGDVDDEYAREEELASMGAQIQSYSRYYESSSSIRVENQSAALSGPGRNVSCSSQMVNARDVPDSMLYHSRDYHLPARTSLHTSSTLYNSANTSRNTFSPHFTSSNQLRLSQNQNNYQISGNLTVPWITGCSRKRALQDRTQFSDRDLATLKKYWDNGMTSLGSVCREKIEAVAAELNVDCEIVRTWIGNRRRKYRLMGIEVPPPRGGPADFSDQSEFVSKSALNPGEETATEVGDDNDRNDEVSICLSEGSSQEETNEVLQNEEIHHKDDDRNPVSADNVKIEIIDDEESDMISNSEVDQMSSLLDYKNEEVRFIENELENHKQKYFELQTFTRSLILAIKSDDKEQQQALLSDLPPELEEMDFNHTSPEPDDTSFSLSSLSEKNASDSL.

2 consecutive DNA-binding regions (homeobox) follow at residues 3–63 (LRSV…SSKS) and 440–503 (ALQD…RLMG). The disordered stretch occupies residues 56 to 81 (RRKMSSKSALESGGAPPGTAHTAPSV). The interval 653–695 (QQALLSDLPPELEEMDFNHTSPEPDDTSFSLSSLSEKNASDSL) is disordered. Residues 679–695 (TSFSLSSLSEKNASDSL) are compositionally biased toward polar residues.

It is found in the nucleus. The sequence is that of Highly divergent homeobox (HDX) from Gallus gallus (Chicken).